The chain runs to 603 residues: MVASAGLLQTSLIWVAYAVAVALVFFVAVITVFTWQTPYDRSKLVTTVAIVSLTALLATVFLLPVDIALVSSTASASRGTKKDWATPERIHGILKTLKIVYYSLYSFDALLCLVVIPFAYFWYEEHDEVLEEEGRETWSTRFWQALKYTIAFIILVIILFLVGFFVPTAAQDHGRHLDLDYFKRLLTNNNGEKALSFGLGLLMTLGVLLYVLYTATGLALLPVSLIKSAPAISAPELSAMTAAELEHNRELQRQIEMRNAGRIVAMSQKDRRELDLLLREERTLVRRQRLAAEASGEGQSTIMRIWTKTQAVFRPLKLFGGILLLCLSVILWISMLITAIDKAANSVCKSHCGYILGHINVFQPVNWVFVKAAKAFPIDYILMAFLILFLFSSSITGIASVGIRFLWVRVFQLKKGRTAPQALLIATVMQALIILAINYAVVNLLAPQYAMYGTQTFCQALSLDPGAPPDCRNHRDMIRPCSESLTDPLAKDVCTPTVMSTFLNRIVLNWTVFGAIDFWAQFAFLTVFLLVFVTSLIRTPRLNLTEIDEEAQADEEEGLLASTSRRFGATWQDITGRAKRTVGGHPNGQGYGTSGTNGTASSR.

The next 9 membrane-spanning stretches (helical) occupy residues 13 to 33 (IWVA…ITVF), 50 to 70 (IVSL…IALV), 99 to 119 (IVYY…IPFA), 150 to 170 (IAFI…PTAA), 201 to 221 (LLMT…LALL), 318 to 338 (LFGG…MLIT), 353 to 373 (GYIL…VKAA), 381 to 401 (ILMA…IASV), and 422 to 442 (ALLI…YAVV). The N-linked (GlcNAc...) asparagine glycan is linked to N509. A helical transmembrane segment spans residues 512–532 (VFGAIDFWAQFAFLTVFLLVF). N-linked (GlcNAc...) asparagine glycosylation occurs at N543. Positions 578–603 (AKRTVGGHPNGQGYGTSGTNGTASSR) are disordered. Gly residues predominate over residues 585 to 595 (HPNGQGYGTSG). N-linked (GlcNAc...) asparagine glycosylation occurs at N597.

Belongs to the LIMR family. LMBRD1 subfamily.

The protein localises to the lysosome membrane. Functionally, probable lysosomal cobalamin transporter. Required to export cobalamin from lysosomes allowing its conversion to cofactors. This Neurospora crassa (strain ATCC 24698 / 74-OR23-1A / CBS 708.71 / DSM 1257 / FGSC 987) protein is Probable lysosomal cobalamin transporter.